Consider the following 246-residue polypeptide: Aliphatic sulfonates import ATP-binding protein SsuB 2 (246 aa).

The ABC transporter domain maps to Val-4–Arg-218. Residue Gly-36–Thr-43 participates in ATP binding.

Belongs to the ABC transporter superfamily. Aliphatic sulfonates importer (TC 3.A.1.17.2) family. In terms of assembly, the complex is composed of two ATP-binding proteins (SsuB), two transmembrane proteins (SsuC) and a solute-binding protein (SsuA).

Its subcellular location is the cell membrane. The enzyme catalyses ATP + H2O + aliphatic sulfonate-[sulfonate-binding protein]Side 1 = ADP + phosphate + aliphatic sulfonateSide 2 + [sulfonate-binding protein]Side 1.. Functionally, part of the ABC transporter complex SsuABC involved in aliphatic sulfonates import. Responsible for energy coupling to the transport system. The chain is Aliphatic sulfonates import ATP-binding protein SsuB 2 from Frankia alni (strain DSM 45986 / CECT 9034 / ACN14a).